A 211-amino-acid chain; its full sequence is Urease accessory protein UreG (211 aa).

16–23 (GPVGSGKT) is a GTP binding site.

This sequence belongs to the SIMIBI class G3E GTPase family. UreG subfamily. Homodimer. UreD, UreF and UreG form a complex that acts as a GTP-hydrolysis-dependent molecular chaperone, activating the urease apoprotein by helping to assemble the nickel containing metallocenter of UreC. The UreE protein probably delivers the nickel.

Its subcellular location is the cytoplasm. Facilitates the functional incorporation of the urease nickel metallocenter. This process requires GTP hydrolysis, probably effectuated by UreG. This chain is Urease accessory protein UreG, found in Janthinobacterium sp. (strain Marseille) (Minibacterium massiliensis).